A 356-amino-acid polypeptide reads, in one-letter code: Homoserine O-acetyltransferase (356 aa).

The AB hydrolase-1 domain occupies 49 to 337 (VLICHALTGS…KSTHGHDAFL (289 aa)). Residue Ser143 is the Nucleophile of the active site. Position 212 (Arg212) interacts with substrate. Active-site residues include Asp304 and His333. Substrate is bound at residue Asp334.

This sequence belongs to the AB hydrolase superfamily. MetX family. In terms of assembly, homodimer.

It is found in the cytoplasm. The enzyme catalyses L-homoserine + acetyl-CoA = O-acetyl-L-homoserine + CoA. Its pathway is amino-acid biosynthesis; L-methionine biosynthesis via de novo pathway; O-acetyl-L-homoserine from L-homoserine: step 1/1. Functionally, transfers an acetyl group from acetyl-CoA to L-homoserine, forming acetyl-L-homoserine. The polypeptide is Homoserine O-acetyltransferase (Nostoc punctiforme (strain ATCC 29133 / PCC 73102)).